An 814-amino-acid chain; its full sequence is Transcription factor oryO (814 aa).

Disordered regions lie at residues 1–59 (MTAR…PACN) and 699–723 (PMDG…SIPP). Composition is skewed to polar residues over residues 16 to 27 (ANPTVRDQTQQD) and 49 to 59 (QPDNTSSPACN). Positions 58 to 85 (CNQCRTRKIRCDRQQPKCSNCRRADVEC) form a DNA-binding region, zn(2)-C6 fungal-type. The span at 713 to 723 (PSESELSSIPP) shows a compositional bias: low complexity.

The protein resides in the nucleus. In terms of biological role, transcription factor that regulates the expression of the gene cluster that mediates the biosynthesis of oryzines, natural products with an unusual maleidride backbone. The chain is Transcription factor oryO from Aspergillus oryzae (strain ATCC 42149 / RIB 40) (Yellow koji mold).